The following is a 589-amino-acid chain: Monocopper oxidase-like protein SKS1 (589 aa).

Positions 1–24 are cleaved as a signal peptide; the sequence is MAATCSLLASFLLCFALLSAVSFA. N-linked (GlcNAc...) asparagine glycans are attached at residues Asn-62, Asn-111, Asn-204, Asn-243, Asn-260, Asn-296, Asn-345, Asn-365, Asn-433, and Asn-447. The segment at 322–356 is disordered; it reads LPVPKTDVSSPWSAMSQPKTIRQNTSASGARPNPQ. Polar residues predominate over residues 328 to 349; that stretch reads DVSSPWSAMSQPKTIRQNTSAS. His-455 is a binding site for Cu cation. Residue Ser-563 is the site of GPI-anchor amidated serine attachment. Residues 564–589 constitute a propeptide, removed in mature form; sequence AATSILNGHLKLMLLMVLLASVFRFC.

The protein belongs to the multicopper oxidase family. Requires Cu cation as cofactor.

It localises to the cell membrane. This Arabidopsis thaliana (Mouse-ear cress) protein is Monocopper oxidase-like protein SKS1 (SKS1).